We begin with the raw amino-acid sequence, 117 residues long: Large ribosomal subunit protein bL20 (117 aa).

It belongs to the bacterial ribosomal protein bL20 family.

Binds directly to 23S ribosomal RNA and is necessary for the in vitro assembly process of the 50S ribosomal subunit. It is not involved in the protein synthesizing functions of that subunit. In Leptospira interrogans serogroup Icterohaemorrhagiae serovar copenhageni (strain Fiocruz L1-130), this protein is Large ribosomal subunit protein bL20.